The primary structure comprises 106 residues: UPF0060 membrane protein Bphy_5052 (106 aa).

4 helical membrane passes run 4–24, 30–50, 58–78, and 82–102; these read LLLY…PWRW, SVWL…LLTF, VYAA…WCVD, and PSAW…IIAF.

It belongs to the UPF0060 family.

It localises to the cell inner membrane. The polypeptide is UPF0060 membrane protein Bphy_5052 (Paraburkholderia phymatum (strain DSM 17167 / CIP 108236 / LMG 21445 / STM815) (Burkholderia phymatum)).